Consider the following 696-residue polypeptide: MTRLGWGRRMVFGAALAAVAILGACNGDESAERNRLPGFVSGSVRTTAYDGASDDLLTAGLGKTGLGSASAPGFANAARPTSAELRRLAIWSNYRALVDMSANGGYGRFWGPNVDLDGNDTLGEGKIPGTEYLAYSDDGSGSKNVTLLVQVPAGFNPAQPCIVTATSSGSRGVYGAISAAGEWALKRGCAVAYNDKGGGNGAHELMSDTITLIDGTLANAVLAGTSSLFTANVTSGDLATFNSRFPNRYAFKHAHSQQNPEQDWGHVTLQSVEFAYWALNEQFGPLIDGSRHGVRYRAGDIMTIAASVSNGGGASLAAAEQDTRGWITAVVVGEPQINVRMAPNVVVRSGGQPVPSFGRPLADYATLANLLEPCAAASASLAGAPYLSALPVATTQSIRTQRCATLAAAGLVSGADTQSQAADALAQLHAAGYLADSDLLQAPMWDSQAIPAIAVTYANAYTRSRVTDNLCNFSFATTNPATGAVAAPATSPMPAVFGVGNGVPPTAGIDLVFNTGAGVDHRLATPDASFAGALCLRQLWTNGMLGMPANVDAVRVNANLQGKPAIIVQGRSDSLVPVNHASRAYVAQNGISEAGRSQLVFYEVTNGQHFDAFLPVPGFDTRFVPVHYYNLQALNLMWKHLKNGAPLPPSQVIRTVPRGGTPGAAPALTSANLPPISAAPGANAITVGAGAIDVPL.

Residues 1-20 (MTRLGWGRRMVFGAALAAVA) form the signal peptide. The active-site Charge relay system is Ser-309.

It belongs to the D-(-)-3-hydroxybutyrate oligomer hydrolase family.

It is found in the secreted. The catalysed reaction is (3R)-hydroxybutanoate dimer + H2O = 2 (R)-3-hydroxybutanoate + H(+). Its pathway is lipid metabolism; butanoate metabolism. Functionally, participates in the degradation of poly-3-hydroxybutyrate (PHB). It works downstream of poly(3-hydroxybutyrate) depolymerase, hydrolyzing D(-)-3-hydroxybutyrate oligomers of various length (3HB-oligomers) into 3HB-monomers. The chain is D-(-)-3-hydroxybutyrate oligomer hydrolase from Burkholderia lata (strain ATCC 17760 / DSM 23089 / LMG 22485 / NCIMB 9086 / R18194 / 383).